A 440-amino-acid polypeptide reads, in one-letter code: Thymidine phosphorylase (440 aa).

Belongs to the thymidine/pyrimidine-nucleoside phosphorylase family. In terms of assembly, homodimer.

It carries out the reaction thymidine + phosphate = 2-deoxy-alpha-D-ribose 1-phosphate + thymine. Its pathway is pyrimidine metabolism; dTMP biosynthesis via salvage pathway; dTMP from thymine: step 1/2. Functionally, the enzymes which catalyze the reversible phosphorolysis of pyrimidine nucleosides are involved in the degradation of these compounds and in their utilization as carbon and energy sources, or in the rescue of pyrimidine bases for nucleotide synthesis. The chain is Thymidine phosphorylase from Yersinia enterocolitica serotype O:8 / biotype 1B (strain NCTC 13174 / 8081).